We begin with the raw amino-acid sequence, 289 residues long: Serine/threonine-protein phosphatase PGAM5, mitochondrial (289 aa).

Residues 1-6 are Mitochondrial matrix-facing; that stretch reads MAFRQA. The chain crosses the membrane as a helical span at residues 7–29; it reads LQLAACGLAGGSAAVLFSAVAVG. Residues 30–289 are Mitochondrial intermembrane-facing; it reads KPRAGGDAEP…FMPPDKITRS (260 aa). The disordered stretch occupies residues 32–59; sequence RAGGDAEPRPAEPPAWAGGARPGPGVWD. Positions 45-56 are enriched in low complexity; that stretch reads PAWAGGARPGPG. An interaction with KEAP1 region spans residues 77-82; sequence NVESGE. Ser-80 and Ser-87 each carry phosphoserine. An N6-acetyllysine mark is found at Lys-116, Lys-144, and Lys-191.

The protein belongs to the phosphoglycerate mutase family. BPG-dependent PGAM subfamily. In terms of assembly, dimer. Forms a ternary complex with NFE2L2 and KEAP1. Interacts with BCL2L1 and MAP3K5. Upon TNF-induced necrosis, forms in complex with RIPK1, RIPK3 and MLKL; the formation of this complex leads to PGAM5 phosphorylation. Isoform 2, but not isoform 1, interacts with DNM1L; this interaction leads to DNM1L dephosphorylation and activation and eventually to mitochondria fragmentation. Both isoform 1 and isoform 2 are phosphorylated by the RIPK1/RIPK3 complex under necrotic conditions. This phosphorylation increases PGAM5 phosphatase activity. Post-translationally, proteolytically cleaved by PARL in response to loss of mitochondrial membrane potential.

Its subcellular location is the mitochondrion outer membrane. It is found in the mitochondrion inner membrane. The enzyme catalyses O-phospho-L-seryl-[protein] + H2O = L-seryl-[protein] + phosphate. The catalysed reaction is O-phospho-L-threonyl-[protein] + H2O = L-threonyl-[protein] + phosphate. Mitochondrial serine/threonine phosphatase that dephosphorylates various substrates and thus plays a role in different biological processes including cellular senescence or mitophagy. Modulates cellular senescence by regulating mitochondrial dynamics. Mechanistically, participates in mitochondrial fission through dephosphorylating DNM1L/DRP1. Additionally, dephosphorylates MFN2 in a stress-sensitive manner and consequently protects it from ubiquitination and degradation to promote mitochondrial network formation. Regulates mitophagy independent of PARKIN by interacting with and dephosphorylating FUNDC1, which interacts with LC3. Regulates anti-oxidative response by forming a tertiary complex with KEAP1 and NRF2. Regulates necroptosis by acting as a RIPK3 target and recruiting the RIPK1-RIPK3-MLKL necrosis 'attack' complex to mitochondria. The sequence is that of Serine/threonine-protein phosphatase PGAM5, mitochondrial (PGAM5) from Homo sapiens (Human).